Consider the following 158-residue polypeptide: Transcriptional repressor NrdR (158 aa).

Residues Cys3 to Cys34 fold into a zinc finger. An ATP-cone domain is found at Pro49–Glu139.

Belongs to the NrdR family. It depends on Zn(2+) as a cofactor.

Its function is as follows. Negatively regulates transcription of bacterial ribonucleotide reductase nrd genes and operons by binding to NrdR-boxes. This is Transcriptional repressor NrdR from Bordetella petrii (strain ATCC BAA-461 / DSM 12804 / CCUG 43448).